A 141-amino-acid polypeptide reads, in one-letter code: MAKTVLRQYWDIPEGTECHRKTYATTSIGGAAGLVVSAYSVALKTPTSFLEGVARTGRYTFTAAAIGAIFGLTSCISAQVREKPDDPLNYLIGGCAGGLILGARTRSYGIGAAACAYMGLTAALVKMGQLEGWQVFAEPKV.

A2 bears the N-acetylalanine mark. The next 2 helical transmembrane spans lie at 22-43 (TYAT…SVAL) and 58-80 (RYTF…SAQV).

In terms of assembly, complex I is composed of 45 different subunits.

Its subcellular location is the mitochondrion inner membrane. Its function is as follows. Accessory subunit of the mitochondrial membrane respiratory chain NADH dehydrogenase (Complex I), that is believed not to be involved in catalysis. Complex I functions in the transfer of electrons from NADH to the respiratory chain. The immediate electron acceptor for the enzyme is believed to be ubiquinone. In Bos taurus (Bovine), this protein is NADH dehydrogenase [ubiquinone] 1 alpha subcomplex subunit 11 (NDUFA11).